The primary structure comprises 335 residues: Twinfilin (335 aa).

ADF-H domains lie at 4–140 and 176–316; these read SSGI…QHKL and GISF…NELH. The disordered stretch occupies residues 307 to 335; it reads SEESIINELHPPKVEEKKAFSKPSRPGRK. A compositionally biased stretch (basic and acidic residues) spans 316 to 325; the sequence is HPPKVEEKKA.

The protein belongs to the actin-binding proteins ADF family. Twinfilin subfamily. Interacts with G-actin; ADP-actin form.

The protein resides in the cytoplasm. It is found in the cytoskeleton. Its subcellular location is the cell cortex. Its function is as follows. Actin-binding protein involved in motile and morphological processes. Inhibits actin polymerization, likely by sequestering G-actin. The protein is Twinfilin (twfA) of Dictyostelium discoideum (Social amoeba).